A 105-amino-acid polypeptide reads, in one-letter code: uncharacterized protein (105 aa).

An N-acetylserine modification is found at Ser2.

This is an uncharacterized protein from Saccharomyces cerevisiae (strain ATCC 204508 / S288c) (Baker's yeast).